Reading from the N-terminus, the 126-residue chain is Large-conductance mechanosensitive channel (126 aa).

2 helical membrane-spanning segments follow: residues 14-34 and 66-86; these read VIDL…VNSL and FITT…LVVV.

This sequence belongs to the MscL family. Homopentamer.

It is found in the cell membrane. In terms of biological role, channel that opens in response to stretch forces in the membrane lipid bilayer. May participate in the regulation of osmotic pressure changes within the cell. This is Large-conductance mechanosensitive channel from Roseiflexus sp. (strain RS-1).